The primary structure comprises 1020 residues: Sodium/potassium-transporting ATPase subunit alpha-2 (1020 aa).

Residues 1 to 5 (MGRGA) constitute a propeptide that is removed on maturation. The segment at 1 to 31 (MGRGAGREYSPAATTAENGGGKKKQKEKELD) is disordered. The Cytoplasmic portion of the chain corresponds to 6–85 (GREYSPAATT…NALTPPPTTP (80 aa)). Ser-10 carries the post-translational modification Phosphoserine. Positions 80 to 82 (PPP) are interaction with phosphoinositide-3 kinase. Residues 86–106 (EWVKFCRQLFGGFSILLWIGA) form a helical membrane-spanning segment. Over 107–129 (ILCFLAYGIQAAMEDEPSNDNLY) the chain is Extracellular. A helical membrane pass occupies residues 130–150 (LGVVLAAVVIVTGCFSYYQEA). Residues 151–286 (KSSKIMDSFK…VGRTPIAMEI (136 aa)) lie on the Cytoplasmic side of the membrane. The segment covering 212 to 227 (DNSSLTGESEPQTRSP) has biased composition (polar residues). The disordered stretch occupies residues 212 to 231 (DNSSLTGESEPQTRSPEFTH). The helical transmembrane segment at 287 to 306 (EHFIQLITGVAVFLGVSFFV) threads the bilayer. Residues 307-318 (LSLILGYSWLEA) lie on the Extracellular side of the membrane. The chain crosses the membrane as a helical span at residues 319–336 (VIFLIGIIVANVPEGLLA). The Cytoplasmic portion of the chain corresponds to 337–769 (TVTVCLTLTA…EEGRLIFDNL (433 aa)). The 4-aspartylphosphate intermediate role is filled by Asp-374. Ser-439, Ser-450, and Ser-559 each carry phosphoserine. Residue Thr-570 is modified to Phosphothreonine. A phosphoserine mark is found at Ser-587 and Ser-672. Residues Asp-714 and Asp-718 each coordinate Mg(2+). The chain crosses the membrane as a helical span at residues 770 to 789 (KKSIAYTLTSNIPEITPFLL). Over 790–799 (FIIANIPLPL) the chain is Extracellular. The helical transmembrane segment at 800-820 (GTVTILCIDLGTDMVPAISLA) threads the bilayer. Topologically, residues 821 to 840 (YEAAESDIMKRQPRNPQTDK) are cytoplasmic. A Phosphoserine modification is found at Ser-826. The helical transmembrane segment at 841–863 (LVNERLISMAYGQIGMIQALGGF) threads the bilayer. At 864-915 (FTYFVILAENGFLPSRLLGIRLDWDDRSMNDLEDSYGQEWTYEQRKVVEFTC) the chain is on the extracellular side. A helical membrane pass occupies residues 916–935 (HTAFFASIVVVQWADLIICK). Over 936–948 (TRRNSVFQQGMKN) the chain is Cytoplasmic. Ser-940 is subject to Phosphoserine; by PKA. The chain crosses the membrane as a helical span at residues 949–967 (KILIFGLLEETALAAFLSY). Topologically, residues 968-982 (CPGMGVALRMYPLKV) are extracellular. Residues 983 to 1003 (TWWFCAFPYSLLIFIYDEVRK) traverse the membrane as a helical segment. Topologically, residues 1004–1020 (LILRRYPGGWVEKETYY) are cytoplasmic.

This sequence belongs to the cation transport ATPase (P-type) (TC 3.A.3) family. Type IIC subfamily. In terms of assembly, the sodium/potassium-transporting ATPase is composed of a catalytic alpha subunit, an auxiliary non-catalytic beta subunit and an additional regulatory subunit. Interacts with regulatory subunit FXYD1.

It is found in the membrane. The protein localises to the cell membrane. The enzyme catalyses K(+)(out) + Na(+)(in) + ATP + H2O = K(+)(in) + Na(+)(out) + ADP + phosphate + H(+). In terms of biological role, this is the catalytic component of the active enzyme, which catalyzes the hydrolysis of ATP coupled with the exchange of sodium and potassium ions across the plasma membrane. This action creates the electrochemical gradient of sodium and potassium, providing the energy for active transport of various nutrients. The protein is Sodium/potassium-transporting ATPase subunit alpha-2 (ATP1A2) of Sus scrofa (Pig).